The sequence spans 86 residues: Putative pro-MCH-like protein 2 (86 aa).

Positions 31-49 (GSVAFPAENGVQDTESTLE) are NGE-like. Residues 40 to 60 (GVQDTESTLEKRETGDEENSA) are disordered. The tract at residues 52-64 (ETGDEENSAKFPI) is NEI-like. Positions 68–86 (DFDTLRCMLGRVYQRCWQV) are melanin-concentrating hormone-like.

This sequence belongs to the melanin-concentrating hormone family. As to expression, expressed in testis but not in brain.

The chain is Putative pro-MCH-like protein 2 (PMCHL2) from Homo sapiens (Human).